Reading from the N-terminus, the 722-residue chain is Mesentericin-Y105 transport/processing ATP-binding protein MesD (722 aa).

Residues 16-143 enclose the Peptidase C39 domain; it reads QVDERDCGVA…EEWTGVSIFI (128 aa). Cys-22 is a catalytic residue. A run of 8 helical transmembrane segments spans residues 171–191, 210–230, 242–262, 287–307, 311–331, 401–421, 429–449, and 518–538; these read LLVI…ILGS, LGIV…LSYA, LSID…MSFF, TMLS…VLVV, TLFL…WLFM, SLLQ…LVMT, LITY…IINL, and IALV…LVNF. One can recognise an ABC transmembrane type-1 domain in the interval 173-455; it reads VINIVIAALL…IINLQTKLQQ (283 aa). In terms of domain architecture, ABC transporter spans 489–722; it reads LVADHITYKY…GGFYASLFNH (234 aa). 522-529 is an ATP binding site; that stretch reads GISGSGKS.

It belongs to the ABC transporter superfamily.

It localises to the cell membrane. Involved in the export process of the bacteriocin mesentericin-Y105. This Leuconostoc mesenteroides protein is Mesentericin-Y105 transport/processing ATP-binding protein MesD (mesD).